A 416-amino-acid polypeptide reads, in one-letter code: Ribosome biogenesis protein WDR12 homolog (416 aa).

Residues 7-89 (VQVRFFTKQK…ESVVEIEYLE (83 aa)) are ubiquitin-like (UBL) domain. WD repeat units lie at residues 101-138 (VHDDWVSSVSRCKNCIITGSYDNCVQIWDDQGSCLAKV), 140-184 (GHTS…ASCV), 189-228 (GHTQSVDSISINPSATKFCSGSWDKTLKLWSAVVNPEGGD), 259-297 (GHTQAVSSVVWMDRTTICSAGWDHCIRLWDAESGVNKQT), 299-338 (TGSKVFCEIAYSALNQCLASGSADKYIRLWDHRAEDGQVV), 344-384 (SHQG…TPLY), and 388-416 (GHQDKVMCVRWSSSRHLMSGGTDNQLILY). Residues 226-245 (GGDEGENGSLSKKQKTTGVK) form a disordered region.

The protein belongs to the WD repeat WDR12/YTM1 family.

The protein resides in the nucleus. Its subcellular location is the nucleolus. The protein localises to the nucleoplasm. In terms of biological role, required for maturation of ribosomal RNAs and formation of the large ribosomal subunit. This Nematostella vectensis (Starlet sea anemone) protein is Ribosome biogenesis protein WDR12 homolog.